The sequence spans 532 residues: D-arabinono-1,4-lactone oxidase (532 aa).

In terms of domain architecture, FAD-binding PCMH-type spans 25 to 199 (YSARPRLYFQ…VRATIRVVPA (175 aa)). H62 carries the pros-8alpha-FAD histidine modification.

The protein belongs to the oxygen-dependent FAD-linked oxidoreductase family. FAD is required as a cofactor.

It is found in the mitochondrion membrane. The catalysed reaction is D-arabinono-1,4-lactone + O2 = dehydro-D-arabinono-1,4-lactone + H2O2 + H(+). The protein operates within cofactor biosynthesis; D-erythroascorbate biosynthesis; dehydro-D-arabinono-1,4-lactone from D-arabinose: step 2/2. In Eremothecium gossypii (strain ATCC 10895 / CBS 109.51 / FGSC 9923 / NRRL Y-1056) (Yeast), this protein is D-arabinono-1,4-lactone oxidase (ALO1).